Consider the following 373-residue polypeptide: Carnosine N-methyltransferase (373 aa).

S-adenosyl-L-methionine is bound by residues Q110, R113, G154, E175, D242, F243, and C262. D266 is a binding site for carnosine. Residue Y274 participates in S-adenosyl-L-methionine binding. Residues H297 and Y356 each coordinate carnosine.

The protein belongs to the carnosine N-methyltransferase family.

The protein localises to the cytoplasm. The protein resides in the nucleus. The enzyme catalyses carnosine + S-adenosyl-L-methionine = anserine + S-adenosyl-L-homocysteine + H(+). In terms of biological role, N-methyltransferase that mediates the formation of anserine (beta-alanyl-N(Pi)-methyl-L-histidine) from carnosine. Also methylates other L-histidine-containing di- and tripeptides such as Gly-Gly-His, Gly-His and homocarnosine (GABA-His). The sequence is that of Carnosine N-methyltransferase from Schizosaccharomyces pombe (strain 972 / ATCC 24843) (Fission yeast).